Reading from the N-terminus, the 598-residue chain is Cytochrome P450 monooxygenase phmB (598 aa).

A helical transmembrane segment spans residues 107–127 (VAAKIAALLFVAGLFWAVSVL). 3 N-linked (GlcNAc...) asparagine glycosylation sites follow: N171, N428, and N494. C542 provides a ligand contact to heme. Residues N549 and N581 are each glycosylated (N-linked (GlcNAc...) asparagine).

This sequence belongs to the cytochrome P450 family. The cofactor is heme.

The protein localises to the membrane. Its pathway is mycotoxin biosynthesis. In terms of biological role, cytochrome P450 monooxygenase; part of the gene cluster that mediates the biosynthesis of the mycotoxins phomacins, leucine-derived cytochalasans with potent actin polymerization-inhibitory activities and monocot-specific antigerminative activities. The first step in the pathway is catalyzed by the hybrid PKS-NRPS phmA, assisted by the enoyl reductase phmE, that are responsible for fusion of the leucine precursor and the polyketide backbone to produce a 2-pyrrolidone intermediate. The polyketide synthase module (PKS) of phmA is responsible for the synthesis of the polyketide backbone and the downstream nonribosomal peptide synthetase (NRPS) amidates the carboxyl end of the polyketide with the leucine precursor. Because phmA lacks a designated enoylreductase (ER) domain, the required activity is provided the enoyl reductase phmE. Reduction by the hydrolyase phmG, followed by dehydration and intra-molecular Diels-Alder cyclization by the Diels-Alderase phmD then yield the required isoindolone-fused macrocycle. A number of oxidative steps catalyzed by the tailoring cytochrome P450 monooxygenase phmB, the FAD-linked oxidoreductase phmC and the short-chain dehydrogenase/reductase phmF, are further required to afford the final products, phomacin D and phomacin E. This is Cytochrome P450 monooxygenase phmB from Phaeosphaeria nodorum (strain SN15 / ATCC MYA-4574 / FGSC 10173) (Glume blotch fungus).